Here is a 257-residue protein sequence, read N- to C-terminus: Pyridoxine 5'-phosphate synthase (257 aa).

N6 is a 3-amino-2-oxopropyl phosphate binding site. 8-9 (DH) is a binding site for 1-deoxy-D-xylulose 5-phosphate. A 3-amino-2-oxopropyl phosphate-binding site is contributed by R17. H41 (proton acceptor) is an active-site residue. Residues R43 and H48 each coordinate 1-deoxy-D-xylulose 5-phosphate. The active-site Proton acceptor is E68. T98 lines the 1-deoxy-D-xylulose 5-phosphate pocket. H210 (proton donor) is an active-site residue. 3-amino-2-oxopropyl phosphate is bound by residues G211 and 232 to 233 (GQ).

Belongs to the PNP synthase family. In terms of assembly, homooctamer; tetramer of dimers.

Its subcellular location is the cytoplasm. It catalyses the reaction 3-amino-2-oxopropyl phosphate + 1-deoxy-D-xylulose 5-phosphate = pyridoxine 5'-phosphate + phosphate + 2 H2O + H(+). The protein operates within cofactor biosynthesis; pyridoxine 5'-phosphate biosynthesis; pyridoxine 5'-phosphate from D-erythrose 4-phosphate: step 5/5. In terms of biological role, catalyzes the complicated ring closure reaction between the two acyclic compounds 1-deoxy-D-xylulose-5-phosphate (DXP) and 3-amino-2-oxopropyl phosphate (1-amino-acetone-3-phosphate or AAP) to form pyridoxine 5'-phosphate (PNP) and inorganic phosphate. This chain is Pyridoxine 5'-phosphate synthase, found in Campylobacter jejuni subsp. jejuni serotype O:6 (strain 81116 / NCTC 11828).